The chain runs to 386 residues: MSVHVKEEPVLVPNCDVENTELAVFNGNGESELENFGTCVDEITDRVNQLEQKVVEVEHFYSTKDGAAQTNTSKSNSGGKKIAISQPNNSKGNSAGKEKSKGKHVSSPDLMRQFATMFRQIAQHKWAWPFLEPVDVKGLGLHDYYKVIEKPMDLGTIKKKMESSEYSNVREIYADVRLVFKNAMRYNEEKEDVYVMAESLLEKFEEKWLLIMPKLVEEEKKQVDEEAEKHANKQLTMEAAQAEMARDLSNELYEIDLQLEKLRESVVQRCRKLSTQEKKGLSAALGRLSPEDLSKALKMVSESNPSFPAGAPEVELDIDVQTDVTLWRLKVFVQEALKAANKSSGGTNAQNNNNTGTGEINKNNAKRRREISDAINKASIKRAKKA.

Disordered regions lie at residues 66-106 (GAAQ…KHVS) and 340-386 (ANKS…AKKA). Residues 68-78 (AQTNTSKSNSG) are compositionally biased toward polar residues. Residues 105 to 211 (VSSPDLMRQF…EKFEEKWLLI (107 aa)) form the Bromo domain. One can recognise an NET domain in the interval 263–344 (RESVVQRCRK…EALKAANKSS (82 aa)). Low complexity predominate over residues 345–358 (GGTNAQNNNNTGTG).

In terms of tissue distribution, barely detectable in stems, leaves, siliques, and dry seeds, but was present at considerable levels in roots, flowers and imbibited seeds.

It is found in the nucleus. Transcription activator that plays a role in the promotion of seed germination by both negatively and positively regulating the abscisic acid (ABA) and phytochrome A (phyA) transduction pathways, respectively. The protein is Transcription factor GTE1 (GTE1) of Arabidopsis thaliana (Mouse-ear cress).